Here is a 741-residue protein sequence, read N- to C-terminus: Cytosolic phospholipase A2 (741 aa).

The 116-residue stretch at 1 to 116 folds into the C2 domain; the sequence is MSNIIVEHQY…KVAQMEHVTL (116 aa). The phospholipid binding stretch occupies residues 1–172; that stretch reads MSNIIVEHQY…IKKLLKMENP (172 aa). Ca(2+) is bound by residues Asp-34, Thr-35, Asp-37, Asn-59, Asp-87, Ala-88, and Asn-89. The PLA2c domain maps to 132 to 729; that stretch reads VCASTDLRFS…SLSEIENKKF (598 aa). The Nucleophile role is filled by Ser-223. Residues 406–453 form a disordered region; sequence TSSSTMEEELEQIKPEHIVGDDSADNEEETQRGGTESADAEDERQRHA. Basic and acidic residues predominate over residues 416–425; that stretch reads EQIKPEHIVG. Ser-498 bears the Phosphoserine; by MAPK mark. Residue Asp-540 is the Proton acceptor of the active site.

In terms of processing, activated by phosphorylation on a serine residue.

The protein localises to the cytoplasm. It localises to the cytoplasmic vesicle. It catalyses the reaction a 1,2-diacyl-sn-glycero-3-phosphocholine + H2O = a 1-acyl-sn-glycero-3-phosphocholine + a fatty acid + H(+). It carries out the reaction a 1-acyl-sn-glycero-3-phosphocholine + H2O = sn-glycerol 3-phosphocholine + a fatty acid + H(+). Its activity is regulated as follows. Stimulated by agonists such as ATP, EGF, thrombin and bradykinin as well as by cytosolic Ca(2+). Functionally, selectively hydrolyzes arachidonyl phospholipids in the sn-2 position releasing arachidonic acid. Together with its lysophospholipid activity, it is implicated in the initiation of the inflammatory response. This is Cytosolic phospholipase A2 (pla2g4a) from Danio rerio (Zebrafish).